Here is a 398-residue protein sequence, read N- to C-terminus: MSEQLLTASTPIDAAPLSDNTVQTTAPATSKINLLDLNRQQMREFFAEMGEKPFRADQVMKWMYHYCYDDFEQMTDINKGLRAKLQRVAEIRAPEVAEEQRSVDGTIKWAIKVGDQQVETVYIPEADRATLCVSSQVGCALECKFCSTAQQGFNRNLRVSEIIGQVWRAAKIIGSLKSTGTRPITNVVMMGMGEPLLNLNNVVPAMDIMMDDFGFGLSKRRVTLSTSGVVPALDKLGDMIDVALAISLHAPTDDIRDEIVPINRKYNIEMFLAAVRRYLDKSKANGGRVTVEYVMLDHINDSTEQAHQLAECLKDTPCKINLIPWNPFPGAPYGRSSNSRVDRFSKVLMEYGFTTIVRKTRGDDIDAACGQLAGEVIDRTKRTLKKKMAGEPIAIKTV.

Residue Glu-119 is the Proton acceptor of the active site. Residues 125 to 364 enclose the Radical SAM core domain; the sequence is EADRATLCVS…TIVRKTRGDD (240 aa). Cys-132 and Cys-369 are oxidised to a cystine. [4Fe-4S] cluster contacts are provided by Cys-139, Cys-143, and Cys-146. Residues 193–194, Ser-225, 247–249, and Asn-326 each bind S-adenosyl-L-methionine; these read GE and SLH. The S-methylcysteine intermediate role is filled by Cys-369.

Belongs to the radical SAM superfamily. RlmN family. Requires [4Fe-4S] cluster as cofactor.

The protein localises to the cytoplasm. It catalyses the reaction adenosine(2503) in 23S rRNA + 2 reduced [2Fe-2S]-[ferredoxin] + 2 S-adenosyl-L-methionine = 2-methyladenosine(2503) in 23S rRNA + 5'-deoxyadenosine + L-methionine + 2 oxidized [2Fe-2S]-[ferredoxin] + S-adenosyl-L-homocysteine. The catalysed reaction is adenosine(37) in tRNA + 2 reduced [2Fe-2S]-[ferredoxin] + 2 S-adenosyl-L-methionine = 2-methyladenosine(37) in tRNA + 5'-deoxyadenosine + L-methionine + 2 oxidized [2Fe-2S]-[ferredoxin] + S-adenosyl-L-homocysteine. Functionally, specifically methylates position 2 of adenine 2503 in 23S rRNA and position 2 of adenine 37 in tRNAs. m2A2503 modification seems to play a crucial role in the proofreading step occurring at the peptidyl transferase center and thus would serve to optimize ribosomal fidelity. The sequence is that of Dual-specificity RNA methyltransferase RlmN from Yersinia pseudotuberculosis serotype IB (strain PB1/+).